A 193-amino-acid polypeptide reads, in one-letter code: 3-isopropylmalate dehydratase small subunit (193 aa).

The protein belongs to the LeuD family. LeuD type 1 subfamily. As to quaternary structure, heterodimer of LeuC and LeuD.

It catalyses the reaction (2R,3S)-3-isopropylmalate = (2S)-2-isopropylmalate. It functions in the pathway amino-acid biosynthesis; L-leucine biosynthesis; L-leucine from 3-methyl-2-oxobutanoate: step 2/4. Catalyzes the isomerization between 2-isopropylmalate and 3-isopropylmalate, via the formation of 2-isopropylmaleate. The chain is 3-isopropylmalate dehydratase small subunit from Listeria monocytogenes serovar 1/2a (strain ATCC BAA-679 / EGD-e).